Reading from the N-terminus, the 130-residue chain is Small ribosomal subunit protein uS9 (130 aa).

Positions P108–R130 are disordered. Over residues K111–R130 the composition is skewed to basic residues.

It belongs to the universal ribosomal protein uS9 family.

This chain is Small ribosomal subunit protein uS9, found in Desulforamulus reducens (strain ATCC BAA-1160 / DSM 100696 / MI-1) (Desulfotomaculum reducens).